A 429-amino-acid chain; its full sequence is O-methyltransferase phnC (429 aa).

Residue Asp-285 coordinates S-adenosyl-L-methionine.

This sequence belongs to the class I-like SAM-binding methyltransferase superfamily. Cation-independent O-methyltransferase family. COMT subfamily.

It catalyses the reaction (2'R)-atrovenetin + S-adenosyl-L-methionine = deoxyherqueinone + S-adenosyl-L-homocysteine + H(+). Its pathway is secondary metabolite biosynthesis. Its function is as follows. O-methyltransferase; part of the gene cluster that mediates the biosynthesis of phenalenones such as herqueinone, compounds that have been reported to treat tumors, bacterial infections and/or mycoses, and rheumatic diseases. The non-reducing polyketide synthase phnA synthesizes the heptaketide backbone and cyclizes it into the angular, hemiketal-containing naphtho-gamma-pyrone prephenalenone. The product template (PT) domain of phnA catalyzes only the C4-C9 aldol condensation, which is unprecedented among known PT domains. The transformation of prephenalenone to phenalenones requires an FAD-dependent monooxygenase phnB, which catalyzes the C2 aromatic hydroxylation of prephenalenone and ring opening of the gamma-pyrone ring simultaneously. Subsequent intramolecular deprotonation of C3 phenolic oxygen accelerates phenalenone ring closure to yield the tricyclic phenalenone core with a C2 hydroxylation. The prenyltransferase phnF further catalyzes reverse C-prenylation of phenalenone by direct electrophilic substitution at C6, or possibly via first a forward O-prenylation of a neighboring phenol in phenalenone, followed by a Claisen rearrangement. The hydroalkoxylation enzyme phnH catalyzes the 5-exo-trig cyclization via acid catalysis after the spontaneous deprotonation of 7-OH, which leads to the formation of the dihydrobenzofuran atrovenetin. Atrovenetin is further converted to deoxyherqueinone by the O-methyltransferase phnC which can methylate C2-OH to stabilize the northern portion of the phenalenone core. Finally, the oxidoreductase phnG converts deoxyherqueinone to herqueinone via C6 hydroxylation. In Penicillium herquei, this protein is O-methyltransferase phnC.